We begin with the raw amino-acid sequence, 613 residues long: Sulfhydryl oxidase 1 (613 aa).

The first 30 residues, 1–30 (MTGCGRRSGWLPPLRLLLLPLLLGGPGVGA), serve as a signal peptide directing secretion. The 121-residue stretch at 37–157 (YSASDPLTLL…RERLIDALES (121 aa)) folds into the Thioredoxin domain. Active-site nucleophile residues include C71 and C74. Cystine bridges form between C71–C74 and C102–C111. N-linked (GlcNAc...) asparagine glycosylation is found at N131 and N244. Residues C394 and C406 are joined by a disulfide bond. Positions 397-504 (SESHFRGFPC…EDPQFPKVQW (108 aa)) constitute an ERV/ALR sulfhydryl oxidase domain. 3 residues coordinate FAD: R402, W409, and H413. The residue at position 427 (S427) is a Phosphoserine. A disulfide bond links C450 and C453. Residues D452, H456, 479 to 486 (WTSHNRVN), K501, and W504 contribute to the FAD site. C510 and C513 are disulfide-bonded.

It belongs to the quiescin-sulfhydryl oxidase (QSOX) family. Monomer. Requires FAD as cofactor. N-glycosylated. O-glycosylated on Thr and Ser residues. In terms of tissue distribution, detected in endometrium and in uterus glandular epithelial cells (at protein level). Expressed in testis, placenta, pancreas, lung, ovary, endometrium, but not in brain, liver and kidney tissues. Higher expression in epithelial cells.

Its subcellular location is the secreted. The enzyme catalyses 2 R'C(R)SH + O2 = R'C(R)S-S(R)CR' + H2O2. Its function is as follows. Catalyzes the oxidation of sulfhydryl groups in peptide and protein thiols to disulfides with the reduction of oxygen to hydrogen peroxide. Plays a role in disulfide bond formation in a variety of extracellular proteins. In fibroblasts, required for normal incorporation of laminin into the extracellular matrix, and thereby for normal cell-cell adhesion and cell migration. The polypeptide is Sulfhydryl oxidase 1 (QSOX1) (Cavia porcellus (Guinea pig)).